The following is a 315-amino-acid chain: Rhomboid-related protein 4 (315 aa).

At 1-21 (MQRRSRGINTGLILLLSQIFH) the chain is on the cytoplasmic side. Residues 22 to 42 (VGINNIPPVTLATLALNIWFF) traverse the membrane as a helical segment. The Extracellular segment spans residues 43–106 (LNPQKPLYSS…RRLGSRWFAY (64 aa)). Residues 107–127 (VITAFSVLTGVVYLLLQFAVA) form a helical membrane-spanning segment. At 128-138 (EFMDEPDFKRS) the chain is on the cytoplasmic side. Residues 139 to 157 (CAVGFSGVLFALKVLNNHY) traverse the membrane as a helical segment. The active-site Nucleophile is Ser144. Over 158-180 (CPGGFVNILGFPVPNRFACWVEL) the chain is Extracellular. Residues 181–201 (VAIHLFSPGTSFAGHLAGILV) traverse the membrane as a helical segment. His195 is a catalytic residue. Over 202–315 (GLMYTQGPLK…RQRLHRFDSQ (114 aa)) the chain is Cytoplasmic. Residues 269 to 284 (SEEEQLERALQASLWD) form a ubiquitin-binding domain (UBD) region. The tract at residues 283–315 (WDRGNTRNSPPPYGFHLSPEEMRRQRLHRFDSQ) is disordered. The segment covering 300–315 (SPEEMRRQRLHRFDSQ) has biased composition (basic and acidic residues). The VCP/p97-interacting motif (VIM) stretch occupies residues 301 to 315 (PEEMRRQRLHRFDSQ).

It belongs to the peptidase S54 family. As to quaternary structure, interacts (via C-terminal domain) with VCP. Interacts with ubiquitin and ubiquitinated proteins. Interacts with BIK and STEAP3. Expressed strongly in testis.

The protein resides in the endoplasmic reticulum membrane. It localises to the mitochondrion membrane. The catalysed reaction is Cleaves type-1 transmembrane domains using a catalytic dyad composed of serine and histidine that are contributed by different transmembrane domains.. Inhibited by aprotinin. Its function is as follows. Intramembrane-cleaving serine protease that cleaves single transmembrane or multi-pass membrane proteins in the hydrophobic plane of the membrane, luminal loops and juxtamembrane regions. Involved in regulated intramembrane proteolysis and the subsequent release of functional polypeptides from their membrane anchors. Functional component of endoplasmic reticulum-associated degradation (ERAD) for misfolded membrane proteins. Required for the degradation process of some specific misfolded endoplasmic reticulum (ER) luminal proteins. Participates in the transfer of misfolded proteins from the ER to the cytosol, where they are destroyed by the proteasome in a ubiquitin-dependent manner. Functions in BIK, MPZ, PKD1, PTCRA, RHO, STEAP3 and TRAC processing. Involved in the regulation of exosomal secretion; inhibits the TSAP6-mediated secretion pathway. Involved in the regulation of apoptosis; modulates BIK-mediated apoptotic activity. Also plays a role in the regulation of spermatogenesis; inhibits apoptotic activity in spermatogonia. The sequence is that of Rhomboid-related protein 4 (RHBDD1) from Homo sapiens (Human).